A 394-amino-acid polypeptide reads, in one-letter code: LL-diaminopimelate aminotransferase (394 aa).

Tyrosine 14 and glycine 41 together coordinate substrate. Pyridoxal 5'-phosphate is bound by residues tyrosine 71, 104-105, tyrosine 128, asparagine 174, tyrosine 205, and 233-235; these read AK and SFS. Residues lysine 105, tyrosine 128, and asparagine 174 each contribute to the substrate site. N6-(pyridoxal phosphate)lysine is present on lysine 236. Positions 244 and 275 each coordinate pyridoxal 5'-phosphate. Substrate is bound by residues asparagine 275 and arginine 369.

It belongs to the class-I pyridoxal-phosphate-dependent aminotransferase family. LL-diaminopimelate aminotransferase subfamily. In terms of assembly, homodimer. Pyridoxal 5'-phosphate serves as cofactor.

The catalysed reaction is (2S,6S)-2,6-diaminopimelate + 2-oxoglutarate = (S)-2,3,4,5-tetrahydrodipicolinate + L-glutamate + H2O + H(+). Its pathway is amino-acid biosynthesis; L-lysine biosynthesis via DAP pathway; LL-2,6-diaminopimelate from (S)-tetrahydrodipicolinate (aminotransferase route): step 1/1. In terms of biological role, involved in the synthesis of meso-diaminopimelate (m-DAP or DL-DAP), required for both lysine and peptidoglycan biosynthesis. Catalyzes the direct conversion of tetrahydrodipicolinate to LL-diaminopimelate. This chain is LL-diaminopimelate aminotransferase, found in Chlamydia trachomatis serovar L2b (strain UCH-1/proctitis).